We begin with the raw amino-acid sequence, 375 residues long: Palmitoyltransferase PFA4 (375 aa).

At 1-9 the chain is on the cytoplasmic side; it reads MAVLVKWPW. A helical membrane pass occupies residues 10–30; it reads LGVAIPCFLISFTGYFAHFFV. The Lumenal segment spans residues 31–33; the sequence is LTN. Residues 34–54 form a helical membrane-spanning segment; it reads FLSFKELLWFQVSLSMIWISY. Residues 55-121 are Cytoplasmic-facing; that stretch reads WKAIYKNPGR…MNCVGYKNFP (67 aa). The DHHC domain occupies 78–128; it reads NYCTKCETYKPERTHHCKRCNQCVLVMDHHCPWTMNCVGYKNFPHFIRFLF. Cysteine 108 functions as the S-palmitoyl cysteine intermediate in the catalytic mechanism. The helical transmembrane segment at 122–142 threads the bilayer; it reads HFIRFLFWIIATTGILLHYFV. Residues 143 to 164 are Lumenal-facing; the sequence is KRIKFTWVNRYATANLVSKQEL. A helical transmembrane segment spans residues 165–185; the sequence is IFLTILTPLDAFILLTISLLF. Over 186-375 the chain is Cytoplasmic; the sequence is VRCVKNQIVN…EHFGVDVEVE (190 aa).

This sequence belongs to the DHHC palmitoyltransferase family. PFA4 subfamily.

It localises to the endoplasmic reticulum membrane. It carries out the reaction L-cysteinyl-[protein] + hexadecanoyl-CoA = S-hexadecanoyl-L-cysteinyl-[protein] + CoA. In terms of biological role, mediates the reversible addition of palmitate to target proteins, thereby regulating their membrane association and biological function. The chain is Palmitoyltransferase PFA4 from Eremothecium gossypii (strain ATCC 10895 / CBS 109.51 / FGSC 9923 / NRRL Y-1056) (Yeast).